The primary structure comprises 240 residues: LexA repressor (240 aa).

The H-T-H motif DNA-binding region spans 26–46 (FDEMKDALDLKSKSGIHRLIT). Catalysis depends on for autocatalytic cleavage activity residues serine 161 and lysine 199.

This sequence belongs to the peptidase S24 family. Homodimer.

It carries out the reaction Hydrolysis of Ala-|-Gly bond in repressor LexA.. Functionally, represses a number of genes involved in the response to DNA damage (SOS response), including recA and lexA. In the presence of single-stranded DNA, RecA interacts with LexA causing an autocatalytic cleavage which disrupts the DNA-binding part of LexA, leading to derepression of the SOS regulon and eventually DNA repair. The sequence is that of LexA repressor from Methylobacterium nodulans (strain LMG 21967 / CNCM I-2342 / ORS 2060).